Consider the following 160-residue polypeptide: Protein-export protein SecB (160 aa).

This sequence belongs to the SecB family. As to quaternary structure, homotetramer, a dimer of dimers. One homotetramer interacts with 1 SecA dimer.

The protein localises to the cytoplasm. One of the proteins required for the normal export of preproteins out of the cell cytoplasm. It is a molecular chaperone that binds to a subset of precursor proteins, maintaining them in a translocation-competent state. It also specifically binds to its receptor SecA. This chain is Protein-export protein SecB, found in Azorhizobium caulinodans (strain ATCC 43989 / DSM 5975 / JCM 20966 / LMG 6465 / NBRC 14845 / NCIMB 13405 / ORS 571).